Here is a 622-residue protein sequence, read N- to C-terminus: Interleukin-1 receptor-associated kinase-like 2 (622 aa).

The region spanning 13–94 is the Death domain; the sequence is LDDLCRNIDT…RAAQIVLSWK (82 aa). One can recognise a Protein kinase domain in the interval 208 to 473; that stretch reads FDQSHRISEG…LPEACEEAWA (266 aa). ATP contacts are provided by residues 214 to 222, Lys-235, and 335 to 338; these read ISEGTFADI and KSAN. Disordered stretches follow at residues 511-532 and 553-591; these read RVSEATGSSSNTPEETDDVDNS and LFTGHGAAQPSTSGRQEADSSSEACTGPQTPQNATETSW. Composition is skewed to polar residues over residues 513-523 and 561-590; these read SEATGSSSNTP and QPSTSGRQEADSSSEACTGPQTPQNATETS.

This sequence belongs to the protein kinase superfamily. TKL Ser/Thr protein kinase family. Pelle subfamily. Interacts with MYD88. IL-1 stimulation leads to the formation of a signaling complex which dissociates from the IL-1 receptor following the binding of PELI1. Ubiquitously expressed, with a higher expression observed in brain, spleen and liver. Isoform 1 and isoform 2 are considered agonist and isoform 3 and isoform 4 are considered antagonist.

Binds to the IL-1 type I receptor following IL-1 engagement, triggering intracellular signaling cascades leading to transcriptional up-regulation and mRNA stabilization. In Mus musculus (Mouse), this protein is Interleukin-1 receptor-associated kinase-like 2 (Irak2).